Here is a 663-residue protein sequence, read N- to C-terminus: Oligopeptide-binding protein SarA (663 aa).

Positions 1-22 are cleaved as a signal peptide; the sequence is MKKGKILALAGVALLATGVLAA. Cys-23 is lipidated: N-palmitoyl cysteine. Residue Cys-23 is the site of S-diacylglycerol cysteine attachment. Residues 637-663 are disordered; it reads QKAQEKWNKERAESNKKAQEELEKHVK.

Belongs to the bacterial solute-binding protein 5 family.

It is found in the cell membrane. May be involved in the expression of cell surface properties important for colonization of the human oral cavity. It may also be involved in uptake processes. The polypeptide is Oligopeptide-binding protein SarA (sarA) (Streptococcus gordonii (strain Challis / ATCC 35105 / BCRC 15272 / CH1 / DL1 / V288)).